We begin with the raw amino-acid sequence, 435 residues long: 3-phosphoshikimate 1-carboxyvinyltransferase (435 aa).

3-phosphoshikimate-binding residues include Lys-23, Ser-24, and Arg-28. Lys-23 lines the phosphoenolpyruvate pocket. 2 residues coordinate phosphoenolpyruvate: Gly-96 and Arg-124. 6 residues coordinate 3-phosphoshikimate: Ser-167, Ser-168, Gln-169, Ser-196, Glu-311, and His-340. Gln-169 lines the phosphoenolpyruvate pocket. Glu-311 (proton acceptor) is an active-site residue. 3 residues coordinate phosphoenolpyruvate: Arg-344, Arg-385, and Lys-410.

The protein belongs to the EPSP synthase family. As to quaternary structure, monomer.

Its subcellular location is the cytoplasm. It carries out the reaction 3-phosphoshikimate + phosphoenolpyruvate = 5-O-(1-carboxyvinyl)-3-phosphoshikimate + phosphate. Its pathway is metabolic intermediate biosynthesis; chorismate biosynthesis; chorismate from D-erythrose 4-phosphate and phosphoenolpyruvate: step 6/7. Its function is as follows. Catalyzes the transfer of the enolpyruvyl moiety of phosphoenolpyruvate (PEP) to the 5-hydroxyl of shikimate-3-phosphate (S3P) to produce enolpyruvyl shikimate-3-phosphate and inorganic phosphate. In Mycolicibacterium paratuberculosis (strain ATCC BAA-968 / K-10) (Mycobacterium paratuberculosis), this protein is 3-phosphoshikimate 1-carboxyvinyltransferase.